A 218-amino-acid chain; its full sequence is MATLTPRQQQIFDLIRDTIRNTGFPPTRAEIAAEFGFSSPNSAEEHLRALARKGVIELTPGASRGIRLKVTRSDSERPDQFSLPMPGVLQLTLPLVGRVAAGSPILAAEHIDRQYQVDASVFDERPDYLLRVRGLSMRDAGILDGDLLAVKKASEAANGKVVVARLGDDVTVKRLKKRGDTIELIAENPDFQNIVLHAGRDEFSLEGIAVGLIRSSGF.

The H-T-H motif DNA-binding region spans 28–48 (RAEIAAEFGFSSPNSAEEHLR). Active-site for autocatalytic cleavage activity residues include serine 136 and lysine 173.

This sequence belongs to the peptidase S24 family. In terms of assembly, homodimer.

The catalysed reaction is Hydrolysis of Ala-|-Gly bond in repressor LexA.. Represses a number of genes involved in the response to DNA damage (SOS response), including recA and lexA. In the presence of single-stranded DNA, RecA interacts with LexA causing an autocatalytic cleavage which disrupts the DNA-binding part of LexA, leading to derepression of the SOS regulon and eventually DNA repair. This is LexA repressor from Cupriavidus metallidurans (strain ATCC 43123 / DSM 2839 / NBRC 102507 / CH34) (Ralstonia metallidurans).